We begin with the raw amino-acid sequence, 750 residues long: Probable methylmalonyl-CoA mutase large subunit (750 aa).

The (R)-methylmalonyl-CoA site is built by tyrosine 91, methionine 94, threonine 101, arginine 103, tyrosine 105, and serine 130. The cob(II)alamin site is built by phenylalanine 133 and alanine 155. 2 residues coordinate (R)-methylmalonyl-CoA: threonine 211 and glutamine 213. The cob(II)alamin site is built by valine 222 and arginine 223. Positions 223, 260, 299, and 301 each coordinate (R)-methylmalonyl-CoA. Residues glycine 349, glutamate 386, alanine 389, glycine 628, histidine 629, aspartate 630, arginine 631, serine 674, leucine 676, glycine 705, and threonine 728 each coordinate cob(II)alamin. Residues 616–748 enclose the B12-binding domain; that stretch reads RPRILIAKMG…HRLAERLGYT (133 aa).

This sequence belongs to the methylmalonyl-CoA mutase family. As to quaternary structure, heterodimer of an alpha and a beta chain. Requires adenosylcob(III)alamin as cofactor.

The catalysed reaction is (R)-methylmalonyl-CoA = succinyl-CoA. It participates in metabolic intermediate metabolism; propanoyl-CoA degradation; succinyl-CoA from propanoyl-CoA: step 3/3. Functionally, catalyzes the isomerization of succinyl-CoA to methylmalonyl-CoA during synthesis of propionate from tricarboxylic acid-cycle intermediates. This is Probable methylmalonyl-CoA mutase large subunit (mutB) from Mycobacterium bovis (strain ATCC BAA-935 / AF2122/97).